A 172-amino-acid polypeptide reads, in one-letter code: MSSSDSPQLHNIFVYGSFQEPDIIHVMLNRIPEIVSATLPGFKRFRLKGRLYPCIIPSENGEVHGKVLMGLTNDELENVDWVEGNEYERVFVEVVRKDNSEKMRVETYPWINKNDPDIGGEWDFEEWKRLHMKTFIEAFTEIMERKRNPQGKGRDDFSNVLKEEDPANAPSS.

15–20 (YGSFQE) is a binding site for substrate. Catalysis depends on glutamate 83, which acts as the Proton acceptor. Residues 146-165 (KRNPQGKGRDDFSNVLKEED) show a composition bias toward basic and acidic residues. Residues 146–172 (KRNPQGKGRDDFSNVLKEEDPANAPSS) are disordered.

It belongs to the gamma-glutamylcyclotransferase family. In terms of tissue distribution, expressed in flowerss, leaves, stems, seeds and roots.

It is found in the cell membrane. Its function is as follows. Putative gamma-glutamylcyclotransferase. This Arabidopsis thaliana (Mouse-ear cress) protein is AIG2-like protein B.